Here is a 67-residue protein sequence, read N- to C-terminus: Conotoxin TsMMSK-B021 (67 aa).

The first 20 residues, methionine 1 to alanine 20, serve as a signal peptide directing secretion. A propeptide spanning residues valine 21–valine 50 is cleaved from the precursor. Disulfide bonds link cysteine 53/cysteine 65, cysteine 54/cysteine 61, and cysteine 58/cysteine 64. The residue at position 63 (proline 63) is a 4-hydroxyproline.

The protein belongs to the conotoxin M superfamily. As to expression, expressed by the venom duct.

Its subcellular location is the secreted. In Conus tessulatus (Tessellate cone), this protein is Conotoxin TsMMSK-B021.